A 438-amino-acid chain; its full sequence is Cyclic 2,3-diphosphoglycerate synthetase (438 aa).

It belongs to the cyclic 2,3-diphosphoglycerate synthetase family.

Its subcellular location is the cytoplasm. It carries out the reaction (2R)-2,3-bisphosphoglycerate + ATP + H(+) = cyclic (2R)-2,3-bisphosphoglycerate + ADP + phosphate. Catalyzes the formation of cyclic 2,3-diphosphoglycerate (cDPG) by formation of an intramolecular phosphoanhydride bond at the expense of ATP. This chain is Cyclic 2,3-diphosphoglycerate synthetase, found in Thermococcus gammatolerans (strain DSM 15229 / JCM 11827 / EJ3).